Here is a 481-residue protein sequence, read N- to C-terminus: Cysteine--tRNA ligase (481 aa).

Residue cysteine 29 coordinates Zn(2+). The 'HIGH' region motif lies at 31-41 (PTVYDYSHLGH). Residues cysteine 210, histidine 235, and glutamate 239 each coordinate Zn(2+). The 'KMSKS' region motif lies at 272 to 276 (KMSKS). Residue lysine 275 participates in ATP binding.

The protein belongs to the class-I aminoacyl-tRNA synthetase family. In terms of assembly, monomer. It depends on Zn(2+) as a cofactor.

Its subcellular location is the cytoplasm. The catalysed reaction is tRNA(Cys) + L-cysteine + ATP = L-cysteinyl-tRNA(Cys) + AMP + diphosphate. This chain is Cysteine--tRNA ligase, found in Anaeromyxobacter sp. (strain K).